The primary structure comprises 277 residues: Bifunctional protein FolD (277 aa).

NADP(+) is bound by residues 159–161, Ser184, and Ile225; that span reads GRS.

This sequence belongs to the tetrahydrofolate dehydrogenase/cyclohydrolase family. As to quaternary structure, homodimer.

It carries out the reaction (6R)-5,10-methylene-5,6,7,8-tetrahydrofolate + NADP(+) = (6R)-5,10-methenyltetrahydrofolate + NADPH. The enzyme catalyses (6R)-5,10-methenyltetrahydrofolate + H2O = (6R)-10-formyltetrahydrofolate + H(+). The protein operates within one-carbon metabolism; tetrahydrofolate interconversion. In terms of biological role, catalyzes the oxidation of 5,10-methylenetetrahydrofolate to 5,10-methenyltetrahydrofolate and then the hydrolysis of 5,10-methenyltetrahydrofolate to 10-formyltetrahydrofolate. The protein is Bifunctional protein FolD of Acholeplasma laidlawii (strain PG-8A).